Reading from the N-terminus, the 156-residue chain is Snaclec stejaggregin-B subunit alpha (156 aa).

The first 23 residues, 1-23 (MGRFISVSFGLLVVFLSLSGTGA), serve as a signal peptide directing secretion. Intrachain disulfides connect C25–C36, C53–C150, and C125–C142. Positions 32–151 (FKQYCYQIIK…CEQKHLFMCK (120 aa)) constitute a C-type lectin domain.

Belongs to the snaclec family. In terms of assembly, heteromultimer; disulfide-linked. In terms of tissue distribution, expressed by the venom gland.

It is found in the secreted. In terms of biological role, interferes with one step of hemostasis (modulation of platelet aggregation, or coagulation cascade, for example). The sequence is that of Snaclec stejaggregin-B subunit alpha from Trimeresurus stejnegeri (Chinese green tree viper).